The following is a 274-amino-acid chain: 2,3,4,5-tetrahydropyridine-2,6-dicarboxylate N-succinyltransferase (274 aa).

Residues R104 and D141 each coordinate substrate.

Belongs to the transferase hexapeptide repeat family. In terms of assembly, homotrimer.

The protein localises to the cytoplasm. It carries out the reaction (S)-2,3,4,5-tetrahydrodipicolinate + succinyl-CoA + H2O = (S)-2-succinylamino-6-oxoheptanedioate + CoA. It participates in amino-acid biosynthesis; L-lysine biosynthesis via DAP pathway; LL-2,6-diaminopimelate from (S)-tetrahydrodipicolinate (succinylase route): step 1/3. This chain is 2,3,4,5-tetrahydropyridine-2,6-dicarboxylate N-succinyltransferase, found in Shewanella amazonensis (strain ATCC BAA-1098 / SB2B).